We begin with the raw amino-acid sequence, 621 residues long: GFPVRVIIPGCIGGRMVKWLKRIIVTPAESDNYYHFKDNRVLPSHVDAELANAEAWWYKPEYIINELNINSVITTPCHDEILPINAFTTQRPYTLKGYAYSGGGKKVTRVEVTLDGGETWLVCTDHPEKPTKYGKYWCWCFWSLEVEVLDLLSAKEIAVRAWDESLNTQPEKLIWNVMGMMNNCWFRVKTNVCKPHKGEIGIVFDHPTLPGNESGGWMAKEKHLETAEAAAPGLKRSTSTPFMNTTDVGKEFTMSEVRKHASQESAWIVVHGHVYDCTKFLKDHPGGADSILINAGTDCTEEFDAIHSDKAKALLDTYRIGELITTGTGYSSDNSVHGGSVLSHLAPIRRAVRAPALSNPREKIHCRLVGKKELSRDVRLFRFSLPSPDQVLGLPIGKHIFVCASIEGKLCMRAYTPTSMVDEIGHFDLLVKVYFKNEHPKFPNGGLMTQYLDSLPVGSYIDVKGPLGHVEYTGRGSFVINGKQRHASRLAMICGGSGITPMYQIIQAVLRDQPEDHTEMHLVYANRTEDDILLRDELDRWAAEYPDRLKVWYVIDQVKRPEEGWKYSVGFVTEAVLREHVPEGGDDTLALACGPPPMIQFAISPNLEKMKYDMANSFVVF.

One can recognise a Cytochrome b5 heme-binding domain in the interval 249 to 324 (GKEFTMSEVR…LDTYRIGELI (76 aa)). Heme contacts are provided by H284 and H307. The FAD-binding FR-type domain maps to 361-473 (REKIHCRLVG…KGPLGHVEYT (113 aa)). FAD-binding positions include 413–416 (RAYT), 430–432 (LVK), F435, 447–449 (LMT), S497, and T500.

It belongs to the nitrate reductase family. In terms of assembly, homodimer. Requires FAD as cofactor. Heme serves as cofactor. It depends on Mo-molybdopterin as a cofactor.

It catalyses the reaction nitrite + NAD(+) + H2O = nitrate + NADH + H(+). In terms of biological role, nitrate reductase is a key enzyme involved in the first step of nitrate assimilation in plants, fungi and bacteria. The sequence is that of Nitrate reductase [NADH] 1 from Zea mays (Maize).